Here is a 751-residue protein sequence, read N- to C-terminus: Zinc finger protein 337 (751 aa).

The KRAB domain maps to 12–83; it reads LAFGDVTVDF…ERRRRPGPCA (72 aa). Low complexity predominate over residues 101–116; it reads QRQQQLQFSDQSFQSD. The interval 101-163 is disordered; sequence QRQQQLQFSD…SSQGQRENPT (63 aa). The segment at 180 to 202 adopts a C2H2-type 1; degenerate zinc-finger fold; it reads FKCAERGQDFSRKMMVIIHKKAH. 9 consecutive C2H2-type zinc fingers follow at residues 208 to 230, 236 to 258, 264 to 286, 292 to 314, 320 to 342, 348 to 370, 376 to 398, 404 to 426, and 432 to 454; these read FTCR…QNTH, YVCS…QRTH, FLCK…ERTH, YECQ…LKAH, FVCK…KRIH, YRCQ…QRTH, FACR…QRTH, FVCK…QRTH, and FVCR…QITH. Lysine 458 participates in a covalent cross-link: Glycyl lysine isopeptide (Lys-Gly) (interchain with G-Cter in SUMO2). 10 C2H2-type zinc fingers span residues 460–482, 488–510, 516–538, 544–566, 572–594, 600–622, 628–650, 656–679, 685–707, and 713–735; these read FVCK…QRTH, YGCR…LRAH, FFCR…QRTH, FMCK…QWTH, FNCK…QKTH, FICS…QLAH, FVCN…WRIH, FVCQ…ERIH, and YECQ…LKRH.

The protein belongs to the krueppel C2H2-type zinc-finger protein family.

It localises to the nucleus. Functionally, may be involved in transcriptional regulation. In Homo sapiens (Human), this protein is Zinc finger protein 337 (ZNF337).